The following is a 427-amino-acid chain: Glutamate-1-semialdehyde 2,1-aminomutase (427 aa).

An N6-(pyridoxal phosphate)lysine modification is found at lysine 265.

The protein belongs to the class-III pyridoxal-phosphate-dependent aminotransferase family. HemL subfamily. In terms of assembly, homodimer. The cofactor is pyridoxal 5'-phosphate.

Its subcellular location is the cytoplasm. The enzyme catalyses (S)-4-amino-5-oxopentanoate = 5-aminolevulinate. It participates in porphyrin-containing compound metabolism; protoporphyrin-IX biosynthesis; 5-aminolevulinate from L-glutamyl-tRNA(Glu): step 2/2. In Burkholderia ambifaria (strain ATCC BAA-244 / DSM 16087 / CCUG 44356 / LMG 19182 / AMMD) (Burkholderia cepacia (strain AMMD)), this protein is Glutamate-1-semialdehyde 2,1-aminomutase.